A 211-amino-acid chain; its full sequence is Thymidylate kinase (211 aa).

Residue Gly7–Ser14 coordinates ATP.

This sequence belongs to the thymidylate kinase family.

It carries out the reaction dTMP + ATP = dTDP + ADP. Its function is as follows. Phosphorylation of dTMP to form dTDP in both de novo and salvage pathways of dTTP synthesis. The protein is Thymidylate kinase of Chlamydia abortus (strain DSM 27085 / S26/3) (Chlamydophila abortus).